The following is a 1714-amino-acid chain: uncharacterized protein (1714 aa).

2 disordered regions span residues 47–70 and 584–616; these read SVAGSEKNASDDDSDASSVMSDDL and KKTGKGGWSGQKQQKPGAGGKKGATKESGKSKK. Residues 607 to 614 and 806 to 813 each bind ATP; these read ATKESGKS and APTSAGKT. A compositionally biased stretch (basic and acidic residues) spans 607–616; the sequence is ATKESGKSKK. In terms of domain architecture, Helicase ATP-binding spans 793-963; it reads LDSVDRGNSA…WLNSSEQAKS (171 aa). Residues 913–916 carry the DEVH box motif; it reads DEVH. Residues 1197–1223 form a disordered region; it reads KRKRDDAEKKKKGDKDEDAGPEKDDDE. The span at 1199–1218 shows a compositional bias: basic and acidic residues; it reads KRDDAEKKKKGDKDEDAGPE. In terms of domain architecture, Helicase C-terminal spans 1237-1391; sequence ALERFKLRGR…NPPFTVLFLL (155 aa).

It belongs to the helicase family. SKI2 subfamily.

Its subcellular location is the nucleus. This is an uncharacterized protein from Caenorhabditis elegans.